Reading from the N-terminus, the 521-residue chain is AAA ATPase forming ring-shaped complexes (521 aa).

A coiled-coil region spans residues 4 to 44; it reads TEDLAALNDRLMAKNHALAEALNRAGKELTKAKSRLAQLAQ. 235 to 240 is an ATP binding site; it reads GNGKTM.

The protein belongs to the AAA ATPase family. As to quaternary structure, homohexamer. Assembles into a hexameric ring structure.

The protein is AAA ATPase forming ring-shaped complexes of Bifidobacterium longum subsp. infantis (strain ATCC 15697 / DSM 20088 / JCM 1222 / NCTC 11817 / S12).